The following is a 298-amino-acid chain: Junctional adhesion molecule B (298 aa).

The N-terminal stretch at 1–28 is a signal peptide; it reads MARSPQGLLMLLLLHYLIVALDYHKANG. The Extracellular segment spans residues 29 to 236; sequence FSASKDHRQE…GKRMQVDVLN (208 aa). Residues 32 to 128 enclose the Ig-like V-type domain; the sequence is SKDHRQEVTV…GQNLQEDKVM (97 aa). 2 disulfides stabilise this stretch: cysteine 51–cysteine 110 and cysteine 156–cysteine 214. An N-linked (GlcNAc...) asparagine glycan is attached at asparagine 99. The Ig-like C2-type domain occupies 135–238; it reads PAVPACEVPT…RMQVDVLNIS (104 aa). Residues 237 to 257 traverse the membrane as a helical segment; it reads ISGIIATVVVVAFVISVCGLG. Over 258 to 298 the chain is Cytoplasmic; sequence TCYAQRKGYFSKETSFQKGSPASKVTTMSENDFKHTKSFII.

Belongs to the immunoglobulin superfamily. Post-translationally, the expression in Sertoli cells is regulated by TGFB3 through ubiquitin-mediated proteasomal degradation. As to expression, expressed by bone marrow stromal cells (at protein level). Expressed in skin (at protein level). Expressed in testis by Sertoli cells (at protein level). Expressed by dorsal root ganglion and spinal cord neurons.

It localises to the cell membrane. The protein resides in the cell junction. It is found in the tight junction. Its function is as follows. Junctional adhesion protein that mediates heterotypic cell-cell interactions with its cognate receptor JAM3 to regulate different cellular processes. Plays a role in homing and mobilization of hematopoietic stem and progenitor cells within the bone marrow. At the surface of bone marrow stromal cells, it contributes to the retention of the hematopoietic stem and progenitor cells expressing JAM3. Plays a central role in leukocytes extravasation by facilitating not only transmigration but also tethering and rolling of leukocytes along the endothelium. Tethering and rolling of leukocytes are dependent on the binding by JAM2 of the integrin alpha-4/beta-1. Plays a role in spermatogenesis where JAM2 and JAM3, which are respectively expressed by Sertoli and germ cells, mediate an interaction between both cell types and play an essential role in the anchorage of germ cells onto Sertoli cells and the assembly of cell polarity complexes during spermatid differentiation. Also functions as an inhibitory somatodendritic cue that prevents the myelination of non-axonal parts of neurons. During myogenesis, it is involved in myocyte fusion. May also play a role in angiogenesis. The chain is Junctional adhesion molecule B from Mus musculus (Mouse).